Consider the following 24-residue polypeptide: Grammistin Pp 4b (24 aa).

As to quaternary structure, exists as aggregates of 3-4 molecules. Expressed by the skin glands.

It localises to the secreted. Functionally, thanks to its abundant amphiphilic alpha-helices, it may integrate into membrane phospholipids, leading to lysis of the membrane. Its hemolytic activity is inhibited by phospholipids, but not by cholesterol. Has antibacterial activity with a broad spectrum against various species of bacteria including both Gram-positive and Gram-negative groups. Also has ichthyotoxic activity. The sequence is that of Grammistin Pp 4b from Pogonoperca punctata (Clown grouper).